The primary structure comprises 510 residues: NAD(P)H-quinone oxidoreductase subunit 2 A, chloroplastic (510 aa).

The next 13 membrane-spanning stretches (helical) occupy residues 24-44 (LLLF…GLIL), 57-77 (IPWL…ALLF), 99-119 (IFQF…VEYI), 124-144 (MAIT…MFLC), 149-169 (LITI…LSGY), 183-203 (YLLM…WLYG), 227-247 (PGIS…LSLA), 295-315 (WHLL…LIAI), 323-343 (MLAY…IVGD), 354-374 (YMLF…SFGL), 395-415 (ALSL…AGFF), 418-438 (LHLF…IGLL), and 484-504 (MIVC…IIAI).

It belongs to the complex I subunit 2 family. In terms of assembly, NDH is composed of at least 16 different subunits, 5 of which are encoded in the nucleus.

Its subcellular location is the plastid. The protein localises to the chloroplast thylakoid membrane. It carries out the reaction a plastoquinone + NADH + (n+1) H(+)(in) = a plastoquinol + NAD(+) + n H(+)(out). The enzyme catalyses a plastoquinone + NADPH + (n+1) H(+)(in) = a plastoquinol + NADP(+) + n H(+)(out). Its function is as follows. NDH shuttles electrons from NAD(P)H:plastoquinone, via FMN and iron-sulfur (Fe-S) centers, to quinones in the photosynthetic chain and possibly in a chloroplast respiratory chain. The immediate electron acceptor for the enzyme in this species is believed to be plastoquinone. Couples the redox reaction to proton translocation, and thus conserves the redox energy in a proton gradient. This chain is NAD(P)H-quinone oxidoreductase subunit 2 A, chloroplastic, found in Ranunculus macranthus (Large buttercup).